The primary structure comprises 444 residues: Acyl-CoA (8-3)-desaturase (444 aa).

M1 carries the N-acetylmethionine modification. Residues M1–Q121 are Cytoplasmic-facing. The Cytochrome b5 heme-binding domain occupies P17–S94. The helical transmembrane segment at M122–L142 threads the bilayer. Topologically, residues D143–A146 are lumenal. The helical transmembrane segment at W147–L167 threads the bilayer. Topologically, residues T168–F267 are cytoplasmic. The Histidine box-1 motif lies at H179–H183. The short motif at H216 to H220 is the Histidine box-2 element. The helical transmembrane segment at L268–I288 threads the bilayer. The Lumenal segment spans residues Q289 to R305. Residues L306 to V326 form a helical membrane-spanning segment. The Cytoplasmic segment spans residues R327–Q444. Residues Q382 to H386 carry the Histidine box-3 motif.

The protein belongs to the fatty acid desaturase type 1 family. Widely expressed. Expressed in brain, liver and thymus (at protein level). Isoform 1 seems to be more abundant than isoform 2. Expression of isoform 2 is very low in spleen and not detectable in skeletal muscle.

The protein resides in the endoplasmic reticulum membrane. It localises to the mitochondrion. The enzyme catalyses (8Z,11Z,14Z)-eicosatrienoyl-CoA + 2 Fe(II)-[cytochrome b5] + O2 + 2 H(+) = (5Z,8Z,11Z,14Z)-eicosatetraenoyl-CoA + 2 Fe(III)-[cytochrome b5] + 2 H2O. It catalyses the reaction (8Z,11Z,14Z,17Z)-eicosatetraenoyl-CoA + 2 Fe(II)-[cytochrome b5] + O2 + 2 H(+) = (5Z,8Z,11Z,14Z,17Z)-eicosapentaenoyl-CoA + 2 Fe(III)-[cytochrome b5] + 2 H2O. The catalysed reaction is (11E)-octadecenoyl-CoA + 2 Fe(II)-[cytochrome b5] + O2 + 2 H(+) = (5Z,11E)-octadecadienoyl-CoA + 2 Fe(III)-[cytochrome b5] + 2 H2O. Its pathway is lipid metabolism; polyunsaturated fatty acid biosynthesis. Functionally, acts as a front-end fatty acyl-coenzyme A (CoA) desaturase that introduces a cis double bond at carbon 5 located between a preexisting double bond and the carboxyl end of the fatty acyl chain. Involved in biosynthesis of highly unsaturated fatty acids (HUFA) from the essential polyunsaturated fatty acids (PUFA) linoleic acid (LA) (18:2n-6) and alpha-linolenic acid (ALA) (18:3n-3) precursors. Specifically, desaturates dihomo-gamma-linoleoate (DGLA) (20:3n-6) and eicosatetraenoate (ETA) (20:4n-3) to generate arachidonate (AA) (20:4n-6) and eicosapentaenoate (EPA) (20:5n-3), respectively. As a rate limiting enzyme for DGLA (20:3n-6) and AA (20:4n-6)-derived eicosanoid biosynthesis, controls the metabolism of inflammatory lipids like prostaglandin E2, critical for efficient acute inflammatory response and maintenance of epithelium homeostasis. Contributes to membrane phospholipid biosynthesis by providing AA (20:4n-6) as a major acyl chain esterified into phospholipids. In particular, regulates phosphatidylinositol-4,5-bisphosphate levels, modulating inflammatory cytokine production in T-cells. Also desaturates (11E)-octadecenoate (trans-vaccenoate)(18:1n-9), a metabolite in the biohydrogenation pathway of LA (18:2n-6). In terms of biological role, does not exhibit any catalytic activity toward 20:3n-6, but it may enhance FADS2 activity. In Papio anubis (Olive baboon), this protein is Acyl-CoA (8-3)-desaturase.